A 348-amino-acid polypeptide reads, in one-letter code: WRKY transcription factor WRKY71 (348 aa).

Residues Val-50 to Gln-84 adopt a coiled-coil conformation. Disordered regions lie at residues Ala-91–His-141 and Gly-246–Val-287. A compositionally biased stretch (low complexity) spans Asn-102–Pro-114. The short motif at Arg-116–Ser-122 is the Nuclear localization signal element. The segment covering Ser-126 to His-136 has biased composition (pro residues). The segment at residues Asp-187–Pro-253 is a DNA-binding region (WRKY). The segment at Ser-267–Asp-348 is transcription repression of gibberellic acid (GA)-induced promoters. The segment covering Pro-275–Val-286 has biased composition (pro residues).

This sequence belongs to the WRKY group II-a family. In terms of assembly, interacts with WRKY51; this interaction promotes W box binding of the complex WRKY51/WRKY71 in a zinc ion-dependent manner. Highly expressed in aleurone cells. In seeds, predominantly present in the plumule, radicle and scutellum of the embryo. Expressed in roots, stems, young leaves and spikelets.

It is found in the nucleus. Transcription repressor. Interacts specifically with the W box (5'-(T)TGAC[CT]-3'), a frequently occurring elicitor-responsive cis-acting element. Represses specifically gibberellic acid (GA)-induced promoters in aleurone cells, probably by interfering with GAM1. Regulates, probably indirectly, the activation of defense-related genes such as GF14E during defense response. Modulates plant innate immunity against X.oryzae pv. oryzae (Xoo). Confers resistance to the virulent bacterial pathogen X.oryzae pv. oryzae (Xoo) 13751, probably via the regulation of NPR1 and PR1b defense signaling pathways. The chain is WRKY transcription factor WRKY71 from Oryza sativa subsp. indica (Rice).